The primary structure comprises 616 residues: Dihydroxy-acid dehydratase (616 aa).

Position 81 (Asp81) interacts with Mg(2+). Cys122 serves as a coordination point for [2Fe-2S] cluster. Residues Asp123 and Lys124 each coordinate Mg(2+). Lys124 bears the N6-carboxylysine mark. [2Fe-2S] cluster is bound at residue Cys195. Residue Glu491 coordinates Mg(2+). Ser517 (proton acceptor) is an active-site residue.

It belongs to the IlvD/Edd family. Homodimer. The cofactor is [2Fe-2S] cluster. Mg(2+) is required as a cofactor.

It catalyses the reaction (2R)-2,3-dihydroxy-3-methylbutanoate = 3-methyl-2-oxobutanoate + H2O. The catalysed reaction is (2R,3R)-2,3-dihydroxy-3-methylpentanoate = (S)-3-methyl-2-oxopentanoate + H2O. Its pathway is amino-acid biosynthesis; L-isoleucine biosynthesis; L-isoleucine from 2-oxobutanoate: step 3/4. It participates in amino-acid biosynthesis; L-valine biosynthesis; L-valine from pyruvate: step 3/4. Functionally, functions in the biosynthesis of branched-chain amino acids. Catalyzes the dehydration of (2R,3R)-2,3-dihydroxy-3-methylpentanoate (2,3-dihydroxy-3-methylvalerate) into 2-oxo-3-methylpentanoate (2-oxo-3-methylvalerate) and of (2R)-2,3-dihydroxy-3-methylbutanoate (2,3-dihydroxyisovalerate) into 2-oxo-3-methylbutanoate (2-oxoisovalerate), the penultimate precursor to L-isoleucine and L-valine, respectively. The chain is Dihydroxy-acid dehydratase from Salmonella heidelberg (strain SL476).